A 348-amino-acid chain; its full sequence is Anthranilate phosphoribosyltransferase (348 aa).

5-phospho-alpha-D-ribose 1-diphosphate is bound by residues G81, 84-85, 91-94, 109-117, and S121; these read GD, NVST, and KHGNRAVSG. G81 is a binding site for anthranilate. S93 contacts Mg(2+). N112 is a binding site for anthranilate. R167 serves as a coordination point for anthranilate. Mg(2+) contacts are provided by D226 and E227.

Belongs to the anthranilate phosphoribosyltransferase family. As to quaternary structure, homodimer. Requires Mg(2+) as cofactor.

The catalysed reaction is N-(5-phospho-beta-D-ribosyl)anthranilate + diphosphate = 5-phospho-alpha-D-ribose 1-diphosphate + anthranilate. It participates in amino-acid biosynthesis; L-tryptophan biosynthesis; L-tryptophan from chorismate: step 2/5. In terms of biological role, catalyzes the transfer of the phosphoribosyl group of 5-phosphorylribose-1-pyrophosphate (PRPP) to anthranilate to yield N-(5'-phosphoribosyl)-anthranilate (PRA). The protein is Anthranilate phosphoribosyltransferase of Azotobacter vinelandii (strain DJ / ATCC BAA-1303).